Here is a 115-residue protein sequence, read N- to C-terminus: Large ribosomal subunit protein bL19 (115 aa).

The protein belongs to the bacterial ribosomal protein bL19 family.

Functionally, this protein is located at the 30S-50S ribosomal subunit interface and may play a role in the structure and function of the aminoacyl-tRNA binding site. The sequence is that of Large ribosomal subunit protein bL19 (rplS) from Buchnera aphidicola subsp. Acyrthosiphon pisum (strain APS) (Acyrthosiphon pisum symbiotic bacterium).